The primary structure comprises 143 residues: 16 kDa calcium-binding protein (143 aa).

EF-hand domains lie at 2-37 (SEEK…VGVC), 41-71 (ADKI…LPPR), 73-108 (KCVA…SGMD), and 109-143 (IDQN…QTYK). Ca(2+)-binding residues include Asp15, Asp17, Asn19, Glu26, Asp49, Asn51, Asp53, Lys55, Glu60, Asp86, Asp88, Ser90, Lys92, Glu97, Asp122, Asn124, Asp126, Glu128, and Glu133.

Found in eggs.

In terms of biological role, calcium-binding protein. In Schistosoma mansoni (Blood fluke), this protein is 16 kDa calcium-binding protein.